Consider the following 96-residue polypeptide: Small ribosomal subunit protein bS21 (96 aa).

The segment covering 37–52 has biased composition (basic and acidic residues); it reads EKPSEKKAREKAEAVR. Positions 37–96 are disordered; sequence EKPSEKKAREKAEAVRRARKLARKKLQREGLLPSKPKPVFGADRGRGAAGGAGGAPRPAR. A compositionally biased stretch (basic residues) spans 53 to 62; the sequence is RARKLARKKL.

It belongs to the bacterial ribosomal protein bS21 family.

The protein is Small ribosomal subunit protein bS21 of Afipia carboxidovorans (strain ATCC 49405 / DSM 1227 / KCTC 32145 / OM5) (Oligotropha carboxidovorans).